The following is a 149-amino-acid chain: Large ribosomal subunit protein bL9 (149 aa).

This sequence belongs to the bacterial ribosomal protein bL9 family.

In terms of biological role, binds to the 23S rRNA. The sequence is that of Large ribosomal subunit protein bL9 from Xanthomonas axonopodis pv. citri (strain 306).